Consider the following 193-residue polypeptide: Cysteine and glycine-rich protein 2 (193 aa).

An LIM zinc-binding 1 domain is found at 10 to 61 (CGACGRTVYHAEEVQCDGRSFHRCCFLCMVCRKNLDSTTVAIHDEEIYCKSC). The Nuclear localization signal motif lies at 64-69 (KKYGPK). K91 participates in a covalent cross-link: Glycyl lysine isopeptide (Lys-Gly) (interchain with G-Cter in SUMO2). N6-acetyllysine is present on residues K112 and K131. Residues 119-170 (CSRCGDSVYAAEKIIGAGKPWHKNCFRCAKCGKSLESTTLTEKEGEIYCKGC) form the LIM zinc-binding 2 domain. K137 carries the N6-acetyllysine; alternate modification. K137 carries the N6-succinyllysine; alternate modification. Position 161 is an N6-acetyllysine (K161).

As to quaternary structure, interacts with KAT14. The LIM domain 1 is necessary and sufficient for this interaction. Interacts with GLRX3.

Its subcellular location is the nucleus. Functionally, drastically down-regulated in response to PDGF-BB or cell injury, that promote smooth muscle cell proliferation and dedifferentiation. Seems to play a role in the development of the embryonic vascular system. This Mus musculus (Mouse) protein is Cysteine and glycine-rich protein 2 (Csrp2).